A 310-amino-acid chain; its full sequence is Imidazolonepropionase (310 aa).

4-imidazolone-5-propanoate-binding residues include Y42 and H75. An N-formimidoyl-L-glutamate-binding site is contributed by Y42. H140 contacts Fe(3+). H140 contributes to the Zn(2+) binding site. Position 143 (E143) interacts with 4-imidazolone-5-propanoate. D215 provides a ligand contact to Fe(3+). D215 serves as a coordination point for Zn(2+). N217 and G219 together coordinate N-formimidoyl-L-glutamate. Position 220 (S220) interacts with 4-imidazolone-5-propanoate.

It belongs to the metallo-dependent hydrolases superfamily. HutI family. The cofactor is Zn(2+). Requires Fe(3+) as cofactor.

The protein resides in the cytoplasm. The catalysed reaction is 4-imidazolone-5-propanoate + H2O = N-formimidoyl-L-glutamate. It functions in the pathway amino-acid degradation; L-histidine degradation into L-glutamate; N-formimidoyl-L-glutamate from L-histidine: step 3/3. Its function is as follows. Catalyzes the hydrolytic cleavage of the carbon-nitrogen bond in imidazolone-5-propanoate to yield N-formimidoyl-L-glutamate. It is the third step in the universal histidine degradation pathway. This chain is Imidazolonepropionase (hutI), found in Streptococcus gordonii.